Consider the following 540-residue polypeptide: 2-isopropylmalate synthase (540 aa).

In terms of domain architecture, Pyruvate carboxyltransferase spans V8–T273. Mn(2+)-binding residues include D17, H208, H210, and N244. The segment at Q408–L540 is regulatory domain.

It belongs to the alpha-IPM synthase/homocitrate synthase family. LeuA type 1 subfamily. In terms of assembly, homodimer. Requires Mn(2+) as cofactor.

It is found in the cytoplasm. The enzyme catalyses 3-methyl-2-oxobutanoate + acetyl-CoA + H2O = (2S)-2-isopropylmalate + CoA + H(+). The protein operates within amino-acid biosynthesis; L-leucine biosynthesis; L-leucine from 3-methyl-2-oxobutanoate: step 1/4. Functionally, catalyzes the condensation of the acetyl group of acetyl-CoA with 3-methyl-2-oxobutanoate (2-ketoisovalerate) to form 3-carboxy-3-hydroxy-4-methylpentanoate (2-isopropylmalate). This is 2-isopropylmalate synthase from Parasynechococcus marenigrum (strain WH8102).